An 83-amino-acid polypeptide reads, in one-letter code: Putative regulatory protein FMG_0656 (83 aa).

Belongs to the RemA family.

In Finegoldia magna (strain ATCC 29328 / DSM 20472 / WAL 2508) (Peptostreptococcus magnus), this protein is Putative regulatory protein FMG_0656.